A 596-amino-acid polypeptide reads, in one-letter code: MEALLSTPINPNNFPAKLWRLVNSPRYRSIRWDGRGEGLLIDQPLFEAELLSPPGPGGGGGTAGAGAEPELFKTTSFTSFIRQLNLYGFRKVVLGGPGGGKPAGNGPLHHFHNPHFRRDQPQLLVHLKRLTSANKAKLAAGLEVPCRPPNRFQRLLITSASAATAPLQHQQPPPPAGPRPEPHGPVAVGQFHRSFRRDSLSPYSCVSTPSHDHSTYPLKGLDRTPVPHRIWQNSLGMHPGQVETSPTFSDKGVPFPVLQRFPTEVTYTLQPSTTSVHVQQGPQTMVSSSQKYSNYTPSAQYSQAYYPTAVLQCCSPTHMDALSSCVTPTASSYAHCNYFQNPSMQSSYPVEFLPSNWPCSTTDENTKTEVNLEAVFQIVDELHSSPKLEMVKVEPVENQCPTSPSYRGQHILANSNNSNPCSASQASQLEPLTPVGSDIMSFVVGTEQAVACSLPQSPEYIYTIHTAQPVENSTIQESAAIQQAHVKLKEHLNHNPSPSSVVFVQEGPPFSTHQVDANIKCQTSSRENILPSEQMGFLISEMGPASKPSEDTGLATPARYREHRSNSQQGKSPDLHLLVDVACKQERFPKEEELKE.

A DNA-binding region spans residues 10–200 (NPNNFPAKLW…FHRSFRRDSL (191 aa)). The disordered stretch occupies residues 541–576 (EMGPASKPSEDTGLATPARYREHRSNSQQGKSPDLH). A Phosphoserine modification is found at serine 572.

The protein belongs to the HSF family. As to quaternary structure, homooligomer.

It is found in the nucleus. It localises to the chromosome. Its function is as follows. DNA-binding transcription factor that is essential for male fertility, spermatogenesis and meiotic prophase progression in spermatocytes under non-stress conditions. Positvely and negatively regulates gene expression to ensure progression of meiotic prophase beyond pachytene stage in spermatocytes. Plays a role in male germline meiotic sex chromosome remodeling and silencing through regulation of SMARCA4. The chain is Heat shock factor protein 5 (HSF5) from Homo sapiens (Human).